A 349-amino-acid polypeptide reads, in one-letter code: Histidinol-phosphate aminotransferase (349 aa).

The disordered stretch occupies residues 1–22; it reads MVSIRPSVRHTPAYVPGEQPQT. N6-(pyridoxal phosphate)lysine is present on Lys-207.

It belongs to the class-II pyridoxal-phosphate-dependent aminotransferase family. Histidinol-phosphate aminotransferase subfamily. As to quaternary structure, homodimer. Pyridoxal 5'-phosphate is required as a cofactor.

It carries out the reaction L-histidinol phosphate + 2-oxoglutarate = 3-(imidazol-4-yl)-2-oxopropyl phosphate + L-glutamate. The protein operates within amino-acid biosynthesis; L-histidine biosynthesis; L-histidine from 5-phospho-alpha-D-ribose 1-diphosphate: step 7/9. The polypeptide is Histidinol-phosphate aminotransferase (hisC) (Synechocystis sp. (strain ATCC 27184 / PCC 6803 / Kazusa)).